We begin with the raw amino-acid sequence, 650 residues long: Chaperone protein DnaK (650 aa).

Thr200 is modified (phosphothreonine; by autocatalysis). A compositionally biased stretch (low complexity) spans 611–636 (AQQAGAAGAAGAAEGAAHAGGAQQAA). Residues 611–637 (AQQAGAAGAAGAAEGAAHAGGAQQAAD) are disordered.

It belongs to the heat shock protein 70 family.

Its function is as follows. Acts as a chaperone. This chain is Chaperone protein DnaK, found in Burkholderia ambifaria (strain MC40-6).